The chain runs to 1058 residues: Carbamoyl phosphate synthase large chain (1058 aa).

A carboxyphosphate synthetic domain region spans residues 1–401 (MAKRTDIKKI…CLLKACRSLE (401 aa)). Residues Arg129, Arg169, Gly175, Gly176, Arg208, Ile210, Glu215, Gly241, Ile242, His243, Gln284, and Glu298 each coordinate ATP. Residues 133 to 327 (KQLMKELGEP…IAKIAAKIAV (195 aa)) form the ATP-grasp 1 domain. Gln284, Glu298, and Asn300 together coordinate Mg(2+). Residues Gln284, Glu298, and Asn300 each coordinate Mn(2+). Positions 402 to 546 (IGVHHNELKG…YSTYEWENES (145 aa)) are oligomerization domain. The carbamoyl phosphate synthetic domain stretch occupies residues 547 to 929 (IKSEKESVIV…ALYKAFEASY (383 aa)). Positions 671–861 (EKALKELGIP…MAQVATKLIL (191 aa)) constitute an ATP-grasp 2 domain. ATP-binding residues include Arg707, Ser746, Ile748, Glu752, Gly777, Val778, His779, Ser780, Gln820, and Glu832. The Mg(2+) site is built by Gln820, Glu832, and Asn834. Mn(2+) is bound by residues Gln820, Glu832, and Asn834. In terms of domain architecture, MGS-like spans 930–1058 (LHMPEYGTIV…ESRTFSIEAI (129 aa)). Residues 930–1058 (LHMPEYGTIV…ESRTFSIEAI (129 aa)) are allosteric domain.

This sequence belongs to the CarB family. Composed of two chains; the small (or glutamine) chain promotes the hydrolysis of glutamine to ammonia, which is used by the large (or ammonia) chain to synthesize carbamoyl phosphate. Tetramer of heterodimers (alpha,beta)4. It depends on Mg(2+) as a cofactor. Mn(2+) serves as cofactor.

The enzyme catalyses hydrogencarbonate + L-glutamine + 2 ATP + H2O = carbamoyl phosphate + L-glutamate + 2 ADP + phosphate + 2 H(+). It carries out the reaction hydrogencarbonate + NH4(+) + 2 ATP = carbamoyl phosphate + 2 ADP + phosphate + 2 H(+). It participates in amino-acid biosynthesis; L-arginine biosynthesis; carbamoyl phosphate from bicarbonate: step 1/1. The protein operates within pyrimidine metabolism; UMP biosynthesis via de novo pathway; (S)-dihydroorotate from bicarbonate: step 1/3. Large subunit of the glutamine-dependent carbamoyl phosphate synthetase (CPSase). CPSase catalyzes the formation of carbamoyl phosphate from the ammonia moiety of glutamine, carbonate, and phosphate donated by ATP, constituting the first step of 2 biosynthetic pathways, one leading to arginine and/or urea and the other to pyrimidine nucleotides. The large subunit (synthetase) binds the substrates ammonia (free or transferred from glutamine from the small subunit), hydrogencarbonate and ATP and carries out an ATP-coupled ligase reaction, activating hydrogencarbonate by forming carboxy phosphate which reacts with ammonia to form carbamoyl phosphate. This is Carbamoyl phosphate synthase large chain from Streptococcus equi subsp. equi (strain 4047).